Here is a 375-residue protein sequence, read N- to C-terminus: Probable L-tyrosine/L-aspartate decarboxylase (375 aa).

The residue at position 226 (lysine 226) is an N6-(pyridoxal phosphate)lysine.

It belongs to the group II decarboxylase family. MfnA subfamily. Pyridoxal 5'-phosphate serves as cofactor.

The catalysed reaction is L-tyrosine + H(+) = tyramine + CO2. It carries out the reaction L-aspartate + H(+) = beta-alanine + CO2. It participates in cofactor biosynthesis; methanofuran biosynthesis. The protein operates within cofactor biosynthesis; coenzyme A biosynthesis. In terms of biological role, catalyzes the decarboxylation of L-tyrosine to produce tyramine for methanofuran biosynthesis. Can also catalyze the decarboxylation of L-aspartate to produce beta-alanine for coenzyme A (CoA) biosynthesis. The polypeptide is Probable L-tyrosine/L-aspartate decarboxylase (Methanocella arvoryzae (strain DSM 22066 / NBRC 105507 / MRE50)).